The sequence spans 314 residues: MINKHFSSEEIEQDGKSCLLKNARLGVLGGSGLYSIDSIENIKELDIETPYGKPSDSLRIGNLGGMEVVFLARHGRHHIYTPTEIPYRANIWALRSLNVRWILSPSAVGSLQEQVRPLDMVVPDQFIDRTHQRPLTFFCDGAVAHVTMADPFCPTLSRLLAEEGELLMPEARQVHKGGTYLAMEGPAFSTRAESQLYRSWGCKVIGMTNHTEARLAREAEIAYTSLSMVTDYDCWHEGFGNVSVDLVIENLAANAKLASKIVEATAKRISKLLPPSEAHTALKNSLMTSKDKVSETTREKINLFTENYWGKFNK.

Phosphate-binding positions include S31, 73-74, and 106-107; these read RH and SA. A substrate-binding site is contributed by M207. Residue T208 participates in phosphate binding. Residue 231 to 233 participates in substrate binding; that stretch reads DYD.

Belongs to the PNP/MTAP phosphorylase family. MTAP subfamily. Homohexamer. Dimer of a homotrimer.

It carries out the reaction S-methyl-5'-thioadenosine + phosphate = 5-(methylsulfanyl)-alpha-D-ribose 1-phosphate + adenine. Its pathway is amino-acid biosynthesis; L-methionine biosynthesis via salvage pathway; S-methyl-5-thio-alpha-D-ribose 1-phosphate from S-methyl-5'-thioadenosine (phosphorylase route): step 1/1. Functionally, catalyzes the reversible phosphorylation of S-methyl-5'-thioadenosine (MTA) to adenine and 5-methylthioribose-1-phosphate. Involved in the breakdown of MTA, a major by-product of polyamine biosynthesis. Responsible for the first step in the methionine salvage pathway after MTA has been generated from S-adenosylmethionine. Has broad substrate specificity with 6-aminopurine nucleosides as preferred substrates. This is S-methyl-5'-thioadenosine phosphorylase from Prochlorococcus marinus (strain SARG / CCMP1375 / SS120).